The primary structure comprises 197 residues: uncharacterized protein (197 aa).

The chain crosses the membrane as a helical span at residues P7 to I27.

Belongs to the IIV-6 307L family.

The protein localises to the membrane. This is an uncharacterized protein from Acheta domesticus (House cricket).